Reading from the N-terminus, the 259-residue chain is Undecaprenyl-diphosphatase 4 (259 aa).

Helical transmembrane passes span M1–I21, A39–Y59, F71–L91, I99–V119, I133–I153, A173–F193, S208–I228, and F239–F259.

The protein belongs to the UppP family.

The protein resides in the cell membrane. It catalyses the reaction di-trans,octa-cis-undecaprenyl diphosphate + H2O = di-trans,octa-cis-undecaprenyl phosphate + phosphate + H(+). Its function is as follows. Catalyzes the dephosphorylation of undecaprenyl diphosphate (UPP). Confers resistance to bacitracin. This Bacillus thuringiensis subsp. konkukian (strain 97-27) protein is Undecaprenyl-diphosphatase 4.